Consider the following 326-residue polypeptide: Glyceraldehyde-3-phosphate dehydrogenase, cytosolic (326 aa).

Residues 2-3 (RI), Asp-24, and Arg-71 each bind NAD(+). Residues 142-144 (SCT), Thr-173, 202-203 (TG), and Arg-225 contribute to the D-glyceraldehyde 3-phosphate site. Cys-143 serves as the catalytic Nucleophile. NAD(+) is bound at residue Asn-307.

It belongs to the glyceraldehyde-3-phosphate dehydrogenase family.

It localises to the cytoplasm. The enzyme catalyses D-glyceraldehyde 3-phosphate + phosphate + NAD(+) = (2R)-3-phospho-glyceroyl phosphate + NADH + H(+). Its pathway is carbohydrate degradation; glycolysis; pyruvate from D-glyceraldehyde 3-phosphate: step 1/5. Its function is as follows. Key enzyme in glycolysis that catalyzes the first step of the pathway by converting D-glyceraldehyde 3-phosphate (G3P) into 3-phospho-D-glyceroyl phosphate. Essential for the maintenance of cellular ATP levels and carbohydrate metabolism. This chain is Glyceraldehyde-3-phosphate dehydrogenase, cytosolic (GAPC), found in Nicotiana tabacum (Common tobacco).